The following is a 134-amino-acid chain: Holo-[acyl-carrier-protein] synthase (134 aa).

Mg(2+) is bound by residues aspartate 8 and glutamate 57.

Belongs to the P-Pant transferase superfamily. AcpS family. Mg(2+) serves as cofactor.

The protein localises to the cytoplasm. It catalyses the reaction apo-[ACP] + CoA = holo-[ACP] + adenosine 3',5'-bisphosphate + H(+). Its function is as follows. Transfers the 4'-phosphopantetheine moiety from coenzyme A to a Ser of acyl-carrier-protein. This Roseobacter denitrificans (strain ATCC 33942 / OCh 114) (Erythrobacter sp. (strain OCh 114)) protein is Holo-[acyl-carrier-protein] synthase.